Reading from the N-terminus, the 257-residue chain is tRNA (guanine-N(7)-)-methyltransferase (257 aa).

Residues Met-1–Thr-12 show a composition bias toward acidic residues. A disordered region spans residues Met-1–Ser-25. Residues Gly-80, Glu-103–Ile-104, Asn-138–Ala-139, and Leu-158 each bind S-adenosyl-L-methionine. Asp-161 is an active-site residue. Ser-236–Glu-238 serves as a coordination point for S-adenosyl-L-methionine.

Belongs to the class I-like SAM-binding methyltransferase superfamily. TrmB family.

The protein localises to the nucleus. It carries out the reaction guanosine(46) in tRNA + S-adenosyl-L-methionine = N(7)-methylguanosine(46) in tRNA + S-adenosyl-L-homocysteine. The protein operates within tRNA modification; N(7)-methylguanine-tRNA biosynthesis. In terms of biological role, catalyzes the formation of N(7)-methylguanine at position 46 (m7G46) in tRNA. This chain is tRNA (guanine-N(7)-)-methyltransferase, found in Drosophila ananassae (Fruit fly).